The sequence spans 141 residues: Large ribosomal subunit protein uL16 (141 aa).

This sequence belongs to the universal ribosomal protein uL16 family. In terms of assembly, part of the 50S ribosomal subunit.

Binds 23S rRNA and is also seen to make contacts with the A and possibly P site tRNAs. The chain is Large ribosomal subunit protein uL16 from Campylobacter hominis (strain ATCC BAA-381 / DSM 21671 / CCUG 45161 / LMG 19568 / NCTC 13146 / CH001A).